The following is a 179-amino-acid chain: Protein GrpE (179 aa).

The interval 1-23 (MSEEIKEQNVQDAQNENLAPDSV) is disordered.

Belongs to the GrpE family. As to quaternary structure, homodimer.

The protein localises to the cytoplasm. Its function is as follows. Participates actively in the response to hyperosmotic and heat shock by preventing the aggregation of stress-denatured proteins, in association with DnaK and GrpE. It is the nucleotide exchange factor for DnaK and may function as a thermosensor. Unfolded proteins bind initially to DnaJ; upon interaction with the DnaJ-bound protein, DnaK hydrolyzes its bound ATP, resulting in the formation of a stable complex. GrpE releases ADP from DnaK; ATP binding to DnaK triggers the release of the substrate protein, thus completing the reaction cycle. Several rounds of ATP-dependent interactions between DnaJ, DnaK and GrpE are required for fully efficient folding. This chain is Protein GrpE, found in Campylobacter curvus (strain 525.92).